We begin with the raw amino-acid sequence, 269 residues long: MSDEEVEQVEEQYEEEEEAQEEAAEVHEEVHEPEEVQEDTAEEDAEEEKPRPKLTAPKIPEGEKVDFDDIQKKRQNKDLMELQALIDSHFEARKKEEEELVALKERIEKRRAERAEQQRIRAEKERERQNRLAEEKARREEEDAKRRAEDDLKKKKALSSMGANYSSYLAKADQKRGKKQTAREMKKKILAERRKPLNIDHLGEDKLRDKAKELWETLHQLEIDKFEFGEKLKRQKYDITTLRSRIDQAQKHSKKAGTPAKGKVGGRWK.

The span at 1–23 (MSDEEVEQVEEQYEEEEEAQEEA) shows a compositional bias: acidic residues. Residues 1 to 72 (MSDEEVEQVE…EKVDFDDIQK (72 aa)) are disordered. Ser2 is modified (N-acetylserine). Ser2 carries the post-translational modification Phosphoserine. Residues 24–34 (AEVHEEVHEPE) show a composition bias toward basic and acidic residues. A compositionally biased stretch (acidic residues) spans 35 to 47 (EVQEDTAEEDAEE). The span at 60–72 (PEGEKVDFDDIQK) shows a compositional bias: basic and acidic residues. At Ser88 the chain carries Phosphoserine. Basic and acidic residues predominate over residues 111 to 153 (RAERAEQQRIRAEKERERQNRLAEEKARREEEDAKRRAEDDLK). A disordered region spans residues 111–158 (RAERAEQQRIRAEKERERQNRLAEEKARREEEDAKRRAEDDLKKKKAL). Phosphoserine is present on residues Ser159, Ser166, and Ser167. Residues 245–269 (RIDQAQKHSKKAGTPAKGKVGGRWK) form a disordered region.

It belongs to the troponin T family. In fetal and adult fast skeletal muscles, with a higher level expression in fetal than in adult muscle.

Its function is as follows. Troponin T is the tropomyosin-binding subunit of troponin, the thin filament regulatory complex which confers calcium-sensitivity to striated muscle actomyosin ATPase activity. The sequence is that of Troponin T, fast skeletal muscle (TNNT3) from Homo sapiens (Human).